Consider the following 739-residue polypeptide: MGTSVQVTPLCGVYNENPLSYLVSIDGFNFLIDCGWNDLFDTSLLEPLSRVASTIDAVLLSHPDTLHIGALPYAMKQLGLSAPVYATEPVHRLGLLTMYDQFLSRKQVSDFDLFTLDDIDSAFQNVIRLTYSQNYHLSGKGEGIVIAPHVAGHMLGGSIWRITKDGEDVIYAVDYNHRKERHLNGTVLQSFVRPAVLITDAYHALYTNQTARQQRDKEFLDTISKHLEVGGNVLLPVDTAGRVLELLLILEQHWSQRGFSFPIYFLTYVSSSTIDYVKSFLEWMSDSISKSFETSRDNAFLLRHVTLLINKTDLDNAPPGPKVVLASMASLEAGFAREIFVEWANDPRNLVLFTETGQFGTLARMLQSAPPPKFVKVTMSKRVPLAGEELIAYEEEQNRLKREEALRASLVKEEETKASHGSDDNSSEPMIIDTKTTHDVIGSHGPAYKDILIDGFVPPSSSVAPMFPYYDNTSEWDDFGEIINPDDYVIKDEDMDRGAMHNGGDVDGRLDEATASLMLDTRPSKVMSNELIVTVSCSLVKMDYEGRSDGRSIKSMIAHVSPLKLVLVHAIAEATEHLKQHCLNNICPHVYAPQIEETVDVTSDLCAYKVQLSEKLMSNVIFKKLGDSEVAWVDSEVGKTERDMRSLLPMPGAASPHKPVLVGDLKIADFKQFLSSKGVQVEFAGGGALRCGEYVTLRKVGPTGQKGGASGPQQILIEGPLCEDYYKIRDYLYSQFYLL.

Positions 411–423 (VKEEETKASHGSD) are enriched in basic and acidic residues. The segment at 411-430 (VKEEETKASHGSDDNSSEPM) is disordered.

It belongs to the metallo-beta-lactamase superfamily. RNA-metabolizing metallo-beta-lactamase-like family. CPSF2/YSH1 subfamily. As to quaternary structure, component of the CPSF complex, at least composed of CPSF160, CPSF100, CPSF73-I, CPSF73-II, CPSF30, FY and FIPS5. Forms a complex with cleavage and polyadenylation specificity factor (CPSF) subunits FY, PAPS2, CSTF50, CPSF30, CPSF73-I, CPSF73-II and CPSF160.

Its subcellular location is the nucleus. It localises to the cytoplasm. In terms of biological role, CPSF plays a key role in pre-mRNA 3'-end formation, recognizing the AAUAAA signal sequence and interacting with poly(A)polymerase and other factors to bring about cleavage and poly(A) addition. Required for antisense-RNA-mediated gene silencing. This chain is Cleavage and polyadenylation specificity factor subunit 2 (CPSF100), found in Arabidopsis thaliana (Mouse-ear cress).